The chain runs to 524 residues: Protopine 6-monooxygenase (524 aa).

Transmembrane regions (helical) follow at residues 4–24, 232–252, and 319–339; these read LMLA…VFLY, LASL…DIFQ, and MIMG…SLLM. Cysteine 462 contributes to the heme binding site.

Belongs to the cytochrome P450 family. It depends on heme as a cofactor.

The protein localises to the endoplasmic reticulum membrane. The catalysed reaction is protopine + reduced [NADPH--hemoprotein reductase] + O2 = 6-hydroxyprotopine + oxidized [NADPH--hemoprotein reductase] + H2O + H(+). Its pathway is alkaloid biosynthesis. In terms of biological role, catalyzes the conversion of protopine and allocryptopine to dihydrosanguinarine and dihydrochelerythrine, respectively, in the biosynthesis of isoquinoline alkaloid sanguinarine. The sequence is that of Protopine 6-monooxygenase (CYP82N2v2) from Eschscholzia californica (California poppy).